The primary structure comprises 298 residues: Small ribosomal subunit protein uS2 (298 aa).

A disordered region spans residues 240 to 298; the sequence is AGENWDTQAPGAGVPGSAFAAASAAAATSWEADGGDWAASSAPPAGESWAETQPTEAKW. Over residues 248-271 the composition is skewed to low complexity; sequence APGAGVPGSAFAAASAAAATSWEA. Residues 289 to 298 are compositionally biased toward polar residues; sequence AETQPTEAKW.

The protein belongs to the universal ribosomal protein uS2 family. In terms of assembly, component of the small ribosomal subunit. Mature ribosomes consist of a small (40S) and a large (60S) subunit. The 40S subunit contains about 33 different proteins and 1 molecule of RNA (18S). The 60S subunit contains about 49 different proteins and 3 molecules of RNA (25S, 5.8S and 5S). Interacts with rps21.

The protein resides in the cytoplasm. Required for the assembly and/or stability of the 40S ribosomal subunit. Required for the processing of the 20S rRNA-precursor to mature 18S rRNA in a late step of the maturation of 40S ribosomal subunits. The polypeptide is Small ribosomal subunit protein uS2 (rps0) (Aspergillus clavatus (strain ATCC 1007 / CBS 513.65 / DSM 816 / NCTC 3887 / NRRL 1 / QM 1276 / 107)).